We begin with the raw amino-acid sequence, 310 residues long: Tagatose-6-phosphate kinase (310 aa).

Belongs to the carbohydrate kinase PfkB family. LacC subfamily.

It catalyses the reaction D-tagatofuranose 6-phosphate + ATP = D-tagatofuranose 1,6-bisphosphate + ADP + H(+). The protein operates within carbohydrate metabolism; D-tagatose 6-phosphate degradation; D-glyceraldehyde 3-phosphate and glycerone phosphate from D-tagatose 6-phosphate: step 1/2. The sequence is that of Tagatose-6-phosphate kinase from Staphylococcus aureus (strain MRSA252).